A 1187-amino-acid chain; its full sequence is uncharacterized protein (1187 aa).

5 disordered regions span residues 302–405, 419–451, 511–551, 1095–1134, and 1148–1187; these read QKSQ…KPVG, QAFS…RASK, KAPG…LRLE, KSQR…KLPD, and PHLP…PASL. Residues 321–333 are compositionally biased toward low complexity; that stretch reads LPLSGPAGAPPLG. Residues 352-361 are compositionally biased toward basic residues; that stretch reads SRRKARHKAS. Low complexity-rich tracts occupy residues 422–435 and 517–534; these read SPLL…SPAA and GTTL…GEPP. Residues 1096–1107 are compositionally biased toward polar residues; that stretch reads SQRTPQGEQSRN. Residues 1160–1174 are compositionally biased toward low complexity; sequence TGGSFSSEGTGSQTS.

This is an uncharacterized protein from Mus musculus (Mouse).